Here is a 155-residue protein sequence, read N- to C-terminus: Small ribosomal subunit protein uS7 (155 aa).

The protein belongs to the universal ribosomal protein uS7 family. In terms of assembly, part of the 30S ribosomal subunit. Contacts proteins S9 and S11.

Its function is as follows. One of the primary rRNA binding proteins, it binds directly to 16S rRNA where it nucleates assembly of the head domain of the 30S subunit. Is located at the subunit interface close to the decoding center, probably blocks exit of the E-site tRNA. The chain is Small ribosomal subunit protein uS7 from Prosthecochloris aestuarii (strain DSM 271 / SK 413).